A 764-amino-acid chain; its full sequence is Phenylalanine--tRNA ligase beta subunit (764 aa).

Positions 38-148 (CIAPKNVVVG…GELVLGKELH (111 aa)) constitute a tRNA-binding domain. One can recognise a B5 domain in the interval 375–455 (LKDCALTFQL…RFVGIDNLVS (81 aa)). Mg(2+) is bound by residues Asp-433, Asp-439, Glu-442, and Glu-443. In terms of domain architecture, FDX-ACB spans 673–763 (SIYPSSVRDL…LEKEFNARLK (91 aa)).

Belongs to the phenylalanyl-tRNA synthetase beta subunit family. Type 1 subfamily. Tetramer of two alpha and two beta subunits. Requires Mg(2+) as cofactor.

The protein localises to the cytoplasm. The enzyme catalyses tRNA(Phe) + L-phenylalanine + ATP = L-phenylalanyl-tRNA(Phe) + AMP + diphosphate + H(+). The polypeptide is Phenylalanine--tRNA ligase beta subunit (pheT) (Helicobacter pylori (strain J99 / ATCC 700824) (Campylobacter pylori J99)).